Here is a 474-residue protein sequence, read N- to C-terminus: 3-isopropylmalate dehydratase large subunit (474 aa).

Residues C355, C415, and C418 each contribute to the [4Fe-4S] cluster site.

The protein belongs to the aconitase/IPM isomerase family. LeuC type 1 subfamily. As to quaternary structure, heterodimer of LeuC and LeuD. It depends on [4Fe-4S] cluster as a cofactor.

The catalysed reaction is (2R,3S)-3-isopropylmalate = (2S)-2-isopropylmalate. The protein operates within amino-acid biosynthesis; L-leucine biosynthesis; L-leucine from 3-methyl-2-oxobutanoate: step 2/4. Its function is as follows. Catalyzes the isomerization between 2-isopropylmalate and 3-isopropylmalate, via the formation of 2-isopropylmaleate. The polypeptide is 3-isopropylmalate dehydratase large subunit (Shewanella sp. (strain W3-18-1)).